The sequence spans 690 residues: Glycine--tRNA ligase beta subunit (690 aa).

The protein belongs to the class-II aminoacyl-tRNA synthetase family. In terms of assembly, tetramer of two alpha and two beta subunits.

It is found in the cytoplasm. It carries out the reaction tRNA(Gly) + glycine + ATP = glycyl-tRNA(Gly) + AMP + diphosphate. The polypeptide is Glycine--tRNA ligase beta subunit (Tolumonas auensis (strain DSM 9187 / NBRC 110442 / TA 4)).